The following is a 124-amino-acid chain: MSWVLIGVAGAAGAVARLLVGAWIDGRPGGRAFPWGTFAVNIAGSLLLGLLTGLVVGRGWLAPEVKVVLGAGFLGAFTTFSTWLLDLHEALRRGDHRAAFVNAALSTGLGLLAAWLGLALGWGR.

Helical transmembrane passes span 4-24 (VLIG…GAWI), 36-56 (GTFA…GLVV), 67-87 (VVLG…LLDL), and 103-123 (AALS…LGWG). Na(+)-binding residues include G75 and T78.

Belongs to the fluoride channel Fluc/FEX (TC 1.A.43) family.

It is found in the cell membrane. The catalysed reaction is fluoride(in) = fluoride(out). With respect to regulation, na(+) is not transported, but it plays an essential structural role and its presence is essential for fluoride channel function. Functionally, fluoride-specific ion channel. Important for reducing fluoride concentration in the cell, thus reducing its toxicity. The sequence is that of Fluoride-specific ion channel FluC 1 from Symbiobacterium thermophilum (strain DSM 24528 / JCM 14929 / IAM 14863 / T).